Consider the following 192-residue polypeptide: Putative cyclic ADP-D-ribose synthase ThsB1 (192 aa).

It belongs to the Thoeris B TIR-like family. In terms of assembly, monomer; not seen to interact with ThsA.

The protein localises to the cytoplasm. Activated upon phage infection. TIR-like domain-containing component of the Thoeris antiviral defense system, composed of ThsA and ThsB. Expression of ThsA and ThsB in B.subtilis (strain BEST7003) confers resistance to phages SBSphiC, SBSphiJ and SPO1. Phage infection activates this protein so that 30 to 45 minutes post-infection with phage SPO1 it generates a signal molecule that in turn activates the NAD(+) hydrolase activity of ThsA. The signal is similar to cyclic ADP-D-ribose, but how it differs is unknown. In vitro purified (but unactivated) ThsB has no NAD(+) hydrolyzing activity, no activity on AMP, CMP, GMP or UMP, does not alter the activity of ThsA, does not bind DNA. Hydrolyzes NAD(+) to make a cyclic ADP-D-ribose (cADPR) signaling molecule; might make 3'cADPR. In Bacillus cereus (strain MSX-D12), this protein is Putative cyclic ADP-D-ribose synthase ThsB1.